The sequence spans 395 residues: Zinc-regulated GTPase metalloprotein activator 1F (395 aa).

The interval 1 to 22 is disordered; the sequence is MLPAVGSVDEEEDPAEEDCPEL. Residues 8–20 show a composition bias toward acidic residues; sequence VDEEEDPAEEDCP. The short motif at 17–24 is the psi-PxLVp motif element; the sequence is EDCPELVP. GTP is bound at residue 49-56; it reads GYLGAGKT. Zn(2+)-binding residues include Cys-107, Cys-109, and Cys-110. A CXCC motif motif is present at residues 107–110; the sequence is CLCC. GTP contacts are provided by residues 110–114 and 203–206; these read CSVKD and NKTD. Residues 274–377 form the CobW C-terminal domain; that stretch reads IVTITFDVPG…ILKQLFIATV (104 aa).

It belongs to the SIMIBI class G3E GTPase family. ZNG1 subfamily.

The protein localises to the nucleus. The catalysed reaction is GTP + H2O = GDP + phosphate + H(+). Its function is as follows. Zinc chaperone that directly transfers zinc cofactor to target metalloproteins, thereby activating them. Catalyzes zinc insertion into the active site of methionine aminopeptidase METAP1, which function to cleave the initiator methionine from polypeptides during or after protein translation. Mechanistically, the N-terminal psi-PxLVp motif binds to the C6H2-type zinc finger of inactive form of METAP1. After formation of the docked complex, zinc is transferred from the CXCC motif in the GTPase domain of ZNG1F to the zinc binding site in the peptidase domain of METAP1 in a process requiring GTP hydrolysis. GTP/GDP exchange is required for release of active METAP1. In Homo sapiens (Human), this protein is Zinc-regulated GTPase metalloprotein activator 1F.